The primary structure comprises 443 residues: Xaa-Pro dipeptidase (443 aa).

Mn(2+) is bound by residues Asp-246, Asp-257, His-339, Glu-384, and Glu-423.

The protein belongs to the peptidase M24B family. Bacterial-type prolidase subfamily. Requires Mn(2+) as cofactor.

It catalyses the reaction Xaa-L-Pro dipeptide + H2O = an L-alpha-amino acid + L-proline. Its function is as follows. Splits dipeptides with a prolyl residue in the C-terminal position. The chain is Xaa-Pro dipeptidase from Serratia proteamaculans (strain 568).